Consider the following 316-residue polypeptide: Ribosomal RNA small subunit methyltransferase H (316 aa).

Residues 35–37, aspartate 55, phenylalanine 79, aspartate 101, and glutamine 108 each bind S-adenosyl-L-methionine; that span reads GGH.

Belongs to the methyltransferase superfamily. RsmH family.

Its subcellular location is the cytoplasm. The catalysed reaction is cytidine(1402) in 16S rRNA + S-adenosyl-L-methionine = N(4)-methylcytidine(1402) in 16S rRNA + S-adenosyl-L-homocysteine + H(+). Its function is as follows. Specifically methylates the N4 position of cytidine in position 1402 (C1402) of 16S rRNA. The protein is Ribosomal RNA small subunit methyltransferase H of Aliivibrio salmonicida (strain LFI1238) (Vibrio salmonicida (strain LFI1238)).